The primary structure comprises 447 residues: GTPase Der (447 aa).

EngA-type G domains are found at residues 3–167 (PVIA…QLPE) and 180–353 (IRLA…KAAT). GTP-binding positions include 9 to 16 (GRPNVGKS), 56 to 60 (DTGGF), 119 to 122 (NKAE), 186 to 193 (GRPNVGKS), 233 to 237 (DTAGL), and 298 to 301 (NKWD). The region spanning 353 to 438 (TCKMPTPVLT…PLRIEMKTSR (86 aa)) is the KH-like domain.

It belongs to the TRAFAC class TrmE-Era-EngA-EngB-Septin-like GTPase superfamily. EngA (Der) GTPase family. In terms of assembly, associates with the 50S ribosomal subunit.

In terms of biological role, GTPase that plays an essential role in the late steps of ribosome biogenesis. The polypeptide is GTPase Der (Paracidovorax citrulli (strain AAC00-1) (Acidovorax citrulli)).